The sequence spans 421 residues: Imidazolonepropionase (421 aa).

Residues His-80 and His-82 each coordinate Fe(3+). Zn(2+)-binding residues include His-80 and His-82. Residues Arg-89, Tyr-152, and His-185 each contribute to the 4-imidazolone-5-propanoate site. An N-formimidoyl-L-glutamate-binding site is contributed by Tyr-152. Fe(3+) is bound at residue His-249. His-249 is a Zn(2+) binding site. 4-imidazolone-5-propanoate is bound at residue Glu-252. Asp-324 contributes to the Fe(3+) binding site. Asp-324 lines the Zn(2+) pocket. Residues Asn-326 and Gly-328 each contribute to the N-formimidoyl-L-glutamate site. 4-imidazolone-5-propanoate is bound at residue Ser-329.

The protein belongs to the metallo-dependent hydrolases superfamily. HutI family. Requires Zn(2+) as cofactor. Fe(3+) serves as cofactor.

It is found in the cytoplasm. It carries out the reaction 4-imidazolone-5-propanoate + H2O = N-formimidoyl-L-glutamate. It participates in amino-acid degradation; L-histidine degradation into L-glutamate; N-formimidoyl-L-glutamate from L-histidine: step 3/3. Its function is as follows. Catalyzes the hydrolytic cleavage of the carbon-nitrogen bond in imidazolone-5-propanoate to yield N-formimidoyl-L-glutamate. It is the third step in the universal histidine degradation pathway. The chain is Imidazolonepropionase from Bacillus velezensis (strain DSM 23117 / BGSC 10A6 / LMG 26770 / FZB42) (Bacillus amyloliquefaciens subsp. plantarum).